The primary structure comprises 368 residues: MKLNLVGLGRNTPIYILEKFDFDEQEFFSSLKVKTTEVAVLKTCHRREIYYIGDKEPLTINEIIEPYIIRKSGIDVVRHLFKVSCGLDSMVLGEHQILSQVKNTHKNFCHGKILNKLFNEAVSLGKEARTKTGINKYPLSISYIAVKLIEEQINIEGKKIFVIGTGMMGQKVIKYLVSRGADIYISNRTIKKAYEIKKMFSEVNIVDFEEKYKHISSSDVVISATNAPHYVVEEKKVNSQKNIIFIDLSMPRNIEPSIKEYHTLYTLEDLNEISKKYNKLRQEKISTIQNLIETRIKKFLTWYKLQTVKDDILYIQNLAEKLVYEEIEKLSKKILLDDNSLKQIQKSLKSCTKKIVSYHINYIKEKVI.

Residues 43–46 (TCHR), Ser89, 94–96 (EHQ), and Gln100 contribute to the substrate site. The active-site Nucleophile is the Cys44. Residue 164 to 169 (GTGMMG) participates in NADP(+) binding.

It belongs to the glutamyl-tRNA reductase family. Homodimer.

It catalyses the reaction (S)-4-amino-5-oxopentanoate + tRNA(Glu) + NADP(+) = L-glutamyl-tRNA(Glu) + NADPH + H(+). Its pathway is porphyrin-containing compound metabolism; protoporphyrin-IX biosynthesis; 5-aminolevulinate from L-glutamyl-tRNA(Glu): step 1/2. Functionally, catalyzes the NADPH-dependent reduction of glutamyl-tRNA(Glu) to glutamate 1-semialdehyde (GSA). The polypeptide is Glutamyl-tRNA reductase (Thermosipho melanesiensis (strain DSM 12029 / CIP 104789 / BI429)).